A 2187-amino-acid chain; its full sequence is Non-reducing polyketide synthase phnA (2187 aa).

Positions 17 to 255 are N-terminal acylcarrier protein transacylase domain (SAT); the sequence is LLFGDLSLAH…KYLDIDSPYH (239 aa). In terms of domain architecture, Ketosynthase family 3 (KS3) spans 383–819; it reads HSKIAIVGYS…GGNTAMLIED (437 aa). Catalysis depends on for beta-ketoacyl synthase activity residues Cys555, His690, and His735. A malonyl-CoA:ACP transacylase (MAT) domain region spans residues 926–1226; it reads RVAFAFTGQG…GMVKGTIDSR (301 aa). Ser1021 serves as the catalytic For acyl/malonyl transferase activity. The segment at 1321–1637 is product template (PT) domain; it reads PCAQQIVEEF…PRRALDHLLP (317 aa). Residues 1324-1458 form an N-terminal hotdog fold region; it reads QQIVEEFHDS…LDVVLYPGQQ (135 aa). One can recognise a PKS/mFAS DH domain in the interval 1324–1633; that stretch reads QQIVEEFHDS…FQGVPRRALD (310 aa). His1356 functions as the Proton acceptor; for dehydratase activity in the catalytic mechanism. Positions 1486 to 1633 are C-terminal hotdog fold; sequence TETHLIKRGM…FQGVPRRALD (148 aa). The active-site Proton donor; for dehydratase activity is the Asp1546. Positions 1652 to 1669 are enriched in low complexity; that stretch reads KAPVAAVAPPRTPTKAAP. Residues 1652–1681 form a disordered region; that stretch reads KAPVAAVAPPRTPTKAAPQSRQAAPKQKRS. Carrier domains follow at residues 1684–1758 and 1796–1874; these read SDVF…SNSD and SSES…YNVM. At Ser1718 the chain carries O-(pantetheine 4'-phosphoryl)serine. The segment at 1754 to 1796 is disordered; sequence LSNSDEDDTPSGDSSTYEDSESQITSPASSVGPETPGGGEFGS. Residues 1757–1774 are compositionally biased toward acidic residues; that stretch reads SDEDDTPSGDSSTYEDSE. Ser1834 carries the post-translational modification O-(pantetheine 4'-phosphoryl)serine. The segment at 1906-2183 is thioesterase (TE) domain; the sequence is SSLPQATSIL…PEMGEAVAEF (278 aa). The active-site For thioesterase activity is the Ser2009.

The enzyme catalyses 6 malonyl-CoA + acetyl-CoA + 5 H(+) = 3,6,7,9-tetrahydroxy-3-methyl-2,3-dihydro-1H-naphtho[2,1-b]pyran-1-one + 6 CO2 + 7 CoA + H2O. Its pathway is secondary metabolite biosynthesis. Functionally, non-reducing polyketide synthase; part of the gene cluster that mediates the biosynthesis of phenalenones such as herqueinone, compounds that have been reported to treat tumors, bacterial infections and/or mycoses, and rheumatic diseases. The non-reducing polyketide synthase phnA synthesizes the heptaketide backbone and cyclizes it into the angular, hemiketal-containing naphtho-gamma-pyrone prephenalenone. The product template (PT) domain of phnA catalyzes only the C4-C9 aldol condensation, which is unprecedented among known PT domains. The transformation of prephenalenone to phenalenones requires an FAD-dependent monooxygenase phnB, which catalyzes the C2 aromatic hydroxylation of prephenalenone and ring opening of the gamma-pyrone ring simultaneously. Subsequent intramolecular deprotonation of C3 phenolic oxygen accelerates phenalenone ring closure to yield the tricyclic phenalenone core with a C2 hydroxylation. The prenyltransferase phnF further catalyzes reverse C-prenylation of phenalenone by direct electrophilic substitution at C6, or possibly via first a forward O-prenylation of a neighboring phenol in phenalenone, followed by a Claisen rearrangement. The hydroalkoxylation enzyme phnH catalyzes the 5-exo-trig cyclization via acid catalysis after the spontaneous deprotonation of 7-OH, which leads to the formation of the dihydrobenzofuran atrovenetin. Atrovenetin is further converted to deoxyherqueinone by the O-methyltransferase phnC which can methylate C2-OH to stabilize the northern portion of the phenalenone core. Finally, the oxidoreductase phnG converts deoxyherqueinone to herqueinone via C6 hydroxylation. The polypeptide is Non-reducing polyketide synthase phnA (Penicillium herquei).